Here is a 149-residue protein sequence, read N- to C-terminus: Large ribosomal subunit protein uL13 (149 aa).

The protein belongs to the universal ribosomal protein uL13 family. As to quaternary structure, part of the 50S ribosomal subunit.

This protein is one of the early assembly proteins of the 50S ribosomal subunit, although it is not seen to bind rRNA by itself. It is important during the early stages of 50S assembly. The sequence is that of Large ribosomal subunit protein uL13 from Prosthecochloris aestuarii (strain DSM 271 / SK 413).